Here is a 354-residue protein sequence, read N- to C-terminus: MGCTLSAEDKAAVERSKMIDRNLREDGEKAAKEVKLLLLGAGESGKSTIVKQMKIIHEDGYSEEECKQYKVVVYSNTIQSIIAIIRAMGRLKIDFGEPARADDARQLFVLAGSAEEGLMTSELAGVIRRLWRDGGVQACFSRSREYQLNDSASYYLNDLDRISQTNYIPTQQDVLRTRVKTTGIVETHFTFKDLYFKMFDVGGQRSERKKWIHCFEGVTAIIFCVALSDYDLVLAEDEEMNRMHESMKLFDSICNNKWFTDTSIILFLNKKDLFEEKIKRSPLTICYPEYTGSNTYEEAAAYIQCQFEDLNRRKDTKEIYTHFTCATDTKNVQFVFDAVTDVIIKNNLKECGLY.

The N-myristoyl glycine moiety is linked to residue glycine 2. Cysteine 3 carries the S-palmitoyl cysteine lipid modification. Positions 32–354 (KEVKLLLLGA…KNNLKECGLY (323 aa)) constitute a G-alpha domain. Residues 35 to 48 (KLLLLGAGESGKST) form a G1 motif region. Positions 42, 43, 44, 45, 46, 47, 48, 150, 151, 175, 176, 177, 178, 179, 180, 181, 201, 203, 269, 270, 272, 273, 325, 326, and 327 each coordinate GTP. Position 47 (serine 47) interacts with Mg(2+). The G2 motif stretch occupies residues 173–181 (DVLRTRVKT). Threonine 181 contacts Mg(2+). The segment at 196-205 (FKMFDVGGQR) is G3 motif. The segment at 265–272 (ILFLNKKD) is G4 motif. The tract at residues 324-329 (TCATDT) is G5 motif.

It belongs to the G-alpha family. G(i/o/t/z) subfamily. Heterotrimeric G proteins are composed of 3 units; alpha, beta and gamma. The alpha subunit contains the guanine nucleotide binding site. GTP binding causes dissociation of the heterotrimer, liberating the individual subunits so that they can interact with downstream effector proteins. Forms a complex with CCDC88A/GIV and EGFR which leads to enhanced EGFR signaling and triggering of cell migration; ligand stimulation is required for recruitment of GNAI3 to the complex. Interacts (inactive GDP-bound form) with CCDC88A/GIV (via GBA motif); the interaction leads to activation of GNAI3. Interacts (inactive GDP-bound form) with CCDC88C/DAPLE (via GBA motif); the interaction leads to activation of GNAI3. Interacts (inactive GDP-bound form) with NUCB1 (via GBA motif) and NUCB2 (via GBA motif); the interaction leads to activation of GNAI3. Interacts (inactive GDP-bound form) with PLCD4 (via GBA motif); the interaction leads to activation of GNAI3. Interacts with INSR; the interaction is probably mediated by CCDC88A/GIV. Interacts with GPSM1. Interacts (GDP-bound form) with GPSM2 (via GoLoco domains). Does not interact with RGS2. Interacts with RGS8 and RGS10; this strongly enhances the intrinsic GTPase activity. Interacts with RGS16; this strongly enhances the intrinsic GTPase activity. Interacts with RGS12. Interacts (via active GTP- or inactive GDP-bound form) with RGS14. Interacts (via active GTP-bound form) with TRPC5 (via ANK repeats) in a homotetrameric ion channel; the interaction is direct and activates the channel activity. In terms of tissue distribution, ubiquitously expressed.

It localises to the cytoplasm. The protein resides in the cell membrane. It is found in the cytoskeleton. Its subcellular location is the microtubule organizing center. The protein localises to the centrosome. In terms of biological role, heterotrimeric guanine nucleotide-binding proteins (G proteins) function as transducers downstream of G protein-coupled receptors (GPCRs) in numerous signaling cascades. The alpha chain contains the guanine nucleotide binding site and alternates between an active, GTP-bound state and an inactive, GDP-bound state. Signaling by an activated GPCR promotes GDP release and GTP binding. The alpha subunit has a low GTPase activity that converts bound GTP to GDP, thereby terminating the signal. Both GDP release and GTP hydrolysis are modulated by numerous regulatory proteins. Signaling is mediated via effector proteins, such as adenylate cyclase. Inhibits adenylate cyclase activity, leading to decreased intracellular cAMP levels. Stimulates the activity of receptor-regulated K(+) channels. The active GTP-bound form prevents the association of RGS14 with centrosomes and is required for the translocation of RGS14 from the cytoplasm to the plasma membrane. May play a role in cell division. The active GTP-bound form activates the calcium permeant TRPC5 ion channels. This Cavia porcellus (Guinea pig) protein is Guanine nucleotide-binding protein G(i) subunit alpha-3 (GNAI3).